A 485-amino-acid chain; its full sequence is Glycogen synthase (485 aa).

Position 18 (K18) interacts with ADP-alpha-D-glucose.

This sequence belongs to the glycosyltransferase 1 family. Bacterial/plant glycogen synthase subfamily.

The catalysed reaction is [(1-&gt;4)-alpha-D-glucosyl](n) + ADP-alpha-D-glucose = [(1-&gt;4)-alpha-D-glucosyl](n+1) + ADP + H(+). The protein operates within glycan biosynthesis; glycogen biosynthesis. Its function is as follows. Synthesizes alpha-1,4-glucan chains using ADP-glucose. The chain is Glycogen synthase from Dechloromonas aromatica (strain RCB).